The following is a 280-amino-acid chain: Shikimate dehydrogenase (NADP(+)) (280 aa).

Shikimate contacts are provided by residues T20 to S22 and T67. K71 functions as the Proton acceptor in the catalytic mechanism. The shikimate site is built by N92 and D107. NADP(+)-binding positions include G131–A135, N154–K159, and L224. Y226 is a shikimate binding site. G247 serves as a coordination point for NADP(+).

The protein belongs to the shikimate dehydrogenase family. As to quaternary structure, homodimer.

It carries out the reaction shikimate + NADP(+) = 3-dehydroshikimate + NADPH + H(+). It participates in metabolic intermediate biosynthesis; chorismate biosynthesis; chorismate from D-erythrose 4-phosphate and phosphoenolpyruvate: step 4/7. In terms of biological role, involved in the biosynthesis of the chorismate, which leads to the biosynthesis of aromatic amino acids. Catalyzes the reversible NADPH linked reduction of 3-dehydroshikimate (DHSA) to yield shikimate (SA). This chain is Shikimate dehydrogenase (NADP(+)), found in Carboxydothermus hydrogenoformans (strain ATCC BAA-161 / DSM 6008 / Z-2901).